The chain runs to 556 residues: Glutamine--tRNA ligase (556 aa).

A 'HIGH' region motif is present at residues 34–44 (PEPNGYLHIGH). ATP is bound by residues 35–37 (EPN) and 41–47 (HIGHAKS). 2 residues coordinate L-glutamine: Asp67 and Tyr212. Residues Thr231, 263–264 (RL), and 271–273 (MSK) each bind ATP. The 'KMSKS' region motif lies at 270 to 274 (VMSKR).

This sequence belongs to the class-I aminoacyl-tRNA synthetase family. Monomer.

It is found in the cytoplasm. The enzyme catalyses tRNA(Gln) + L-glutamine + ATP = L-glutaminyl-tRNA(Gln) + AMP + diphosphate. This is Glutamine--tRNA ligase from Nitrosomonas europaea (strain ATCC 19718 / CIP 103999 / KCTC 2705 / NBRC 14298).